A 512-amino-acid chain; its full sequence is Immunoglobulin delta heavy chain (512 aa).

2 consecutive Ig-like domains span residues 1–97 (RLQL…MYYC) and 135–227 (PDVF…KEIF). The tract at residues 1 to 129 (RLQLQESGPG…GQGTTVHVSS (129 aa)) is variable (V) domain, involved in antigen recognition. Intrachain disulfides connect C22-C97 and C157-C213. The segment at 130-512 (APTKAPDVFP…VSYVTDHGPM (383 aa)) is constant (C) domain. The segment at 225–296 (EIFRWPESPK…TPECPSHTQP (72 aa)) is disordered. The span at 235 to 247 (AQASSVPTAQPQA) shows a compositional bias: polar residues. S238 is a glycosylation site (O-linked (GalNAc...) serine). T255, T256, T260, and T261 each carry an O-linked (GalNAc...) threonine glycan. A compositionally biased stretch (basic and acidic residues) spans 267-287 (GGEEKKKEKEKEEQEERETKT). 2 Ig-like domains span residues 304-392 (PAVQ…RLMA) and 396-502 (PAAQ…RSLE). Intrachain disulfides connect C319/C378 and C423/C484. 3 N-linked (GlcNAc...) asparagine glycosylation sites follow: N354, N445, and N496.

Immunoglobulins are composed of two identical heavy chains and two identical light chains; disulfide-linked. An IgD molecule contains thus a delta heavy chain combined with either a kappa or a lambda light chains. Kappa light chains are found predominantly on the membrane IgD (mIgD) form and lambda on the secreted IgD (sIgD) form, this fact is poorly understood. Membrane-bound IgD molecules are non-covalently associated with a heterodimer of CD79A and CD79B.

Its subcellular location is the secreted. It localises to the cell membrane. Functionally, immunoglobulins, also known as antibodies, are membrane-bound or secreted glycoproteins produced by B lymphocytes. In the recognition phase of humoral immunity, the membrane-bound immunoglobulins serve as receptors which, upon binding of a specific antigen, trigger the clonal expansion and differentiation of B lymphocytes into immunoglobulins-secreting plasma cells. Secreted immunoglobulins mediate the effector phase of humoral immunity, which results in the elimination of bound antigens. The antigen binding site is formed by the variable domain of one heavy chain, together with that of its associated light chain. Thus, each immunoglobulin has two antigen binding sites with remarkable affinity for a particular antigen. The variable domains are assembled by a process called V-(D)-J rearrangement and can then be subjected to somatic hypermutations which, after exposure to antigen and selection, allow affinity maturation for a particular antigen. IgD is the major antigen receptor isotype on the surface of most peripheral B cells, where it is coexpressed with IgM. The membrane-bound IgD (mIgD) induces the phosphorylation of CD79A and CD79B by the Src family of protein tyrosine kinases. Soluble IgD (sIgD) concentration in serum is below those of IgG, IgA, and IgM but much higher than that of IgE. IgM and IgD molecules present on B cells have identical V regions and antigen-binding sites. After the antigen binds to the B cell receptor, the secreted form sIgD is shut off. IgD is a potent inducer of TNF, IL1B, and IL1RN. IgD also induces release of IL6, IL10, and LIF from peripheral blood mononuclear cells. Monocytes seem to be the main producers of cytokines in vitro in the presence of IgD. The polypeptide is Immunoglobulin delta heavy chain (Homo sapiens (Human)).